The primary structure comprises 201 residues: Recombination protein RecR (201 aa).

The C4-type zinc finger occupies 60–75 (CRSCGNVDTSDPCTIC). Residues 83 to 178 (TTLVVVEDVS…TVTRLAHGVP (96 aa)) form the Toprim domain.

Belongs to the RecR family.

May play a role in DNA repair. It seems to be involved in an RecBC-independent recombinational process of DNA repair. It may act with RecF and RecO. This Methylorubrum extorquens (strain CM4 / NCIMB 13688) (Methylobacterium extorquens) protein is Recombination protein RecR.